The sequence spans 317 residues: 4-hydroxy-3-methylbut-2-enyl diphosphate reductase (317 aa).

Cys12 contacts [4Fe-4S] cluster. Residues His41 and His74 each contribute to the (2E)-4-hydroxy-3-methylbut-2-enyl diphosphate site. Dimethylallyl diphosphate is bound by residues His41 and His74. 2 residues coordinate isopentenyl diphosphate: His41 and His74. Cys96 serves as a coordination point for [4Fe-4S] cluster. His124 contributes to the (2E)-4-hydroxy-3-methylbut-2-enyl diphosphate binding site. His124 is a dimethylallyl diphosphate binding site. His124 contributes to the isopentenyl diphosphate binding site. Catalysis depends on Glu126, which acts as the Proton donor. Residue Thr169 coordinates (2E)-4-hydroxy-3-methylbut-2-enyl diphosphate. Cys199 contributes to the [4Fe-4S] cluster binding site. Positions 227, 228, 229, and 271 each coordinate (2E)-4-hydroxy-3-methylbut-2-enyl diphosphate. Residues Ser227, Ser228, Asn229, and Ser271 each coordinate dimethylallyl diphosphate. Positions 227, 228, 229, and 271 each coordinate isopentenyl diphosphate.

Belongs to the IspH family. [4Fe-4S] cluster is required as a cofactor.

The catalysed reaction is isopentenyl diphosphate + 2 oxidized [2Fe-2S]-[ferredoxin] + H2O = (2E)-4-hydroxy-3-methylbut-2-enyl diphosphate + 2 reduced [2Fe-2S]-[ferredoxin] + 2 H(+). The enzyme catalyses dimethylallyl diphosphate + 2 oxidized [2Fe-2S]-[ferredoxin] + H2O = (2E)-4-hydroxy-3-methylbut-2-enyl diphosphate + 2 reduced [2Fe-2S]-[ferredoxin] + 2 H(+). The protein operates within isoprenoid biosynthesis; dimethylallyl diphosphate biosynthesis; dimethylallyl diphosphate from (2E)-4-hydroxy-3-methylbutenyl diphosphate: step 1/1. It participates in isoprenoid biosynthesis; isopentenyl diphosphate biosynthesis via DXP pathway; isopentenyl diphosphate from 1-deoxy-D-xylulose 5-phosphate: step 6/6. Catalyzes the conversion of 1-hydroxy-2-methyl-2-(E)-butenyl 4-diphosphate (HMBPP) into a mixture of isopentenyl diphosphate (IPP) and dimethylallyl diphosphate (DMAPP). Acts in the terminal step of the DOXP/MEP pathway for isoprenoid precursor biosynthesis. This is 4-hydroxy-3-methylbut-2-enyl diphosphate reductase from Vibrio parahaemolyticus serotype O3:K6 (strain RIMD 2210633).